We begin with the raw amino-acid sequence, 705 residues long: MARTTPIERYRNFGIMAHIDAGKTTTSERILFYTGVSHKIGEVHDGAAVMDWMEQEQERGITITSAATTAFWSGMDKSMPQHRFNIIDTPGHVDFTIEVERSLRVLDGAVFVLCAVGGVQPQSETVWRQANKYSVPRMAFVNKMDRTGANFDKVVEQLKARLGAYAVPMQVPIGAEDGFEGVVDLLKMKAIHWDTASQGTTFEYSDIPAELVDVATDARSFMVEAAAEASEDLMDKYLNEGDLSEEEILKGLRERTLKVEIVPVFCGSAFKNKGVQAMLDGVVHLLPSPADRPPVQGIDEDEKEDTRAATDTAPFSALAFKIMTDPFVGSLTFFRVYSGTLNSGDQVYNPVKSKKERVGRILQMHSNNREEIKEVRAGDIAAAVGLKDVTTGDTLCAQDKIITLERMVFPEPVISMAVEPKTKSDQEKMGMALGRLAQEDPSFRVKTDEESGQTIISGMGELHLDIIVDRMRREFNVEANVGKPQVAYRETIRKSDVKSDYKHAKQSGGKGQYGHVVIELSPMTEEDRKSDNVKDDFLFINDITGGIIPKEFIPSVEKGLRETITSGPIAGFPVVGVKVKLVFGSYHDVDSSEMAFKLAASMAFKQGFAKASPVLLEPIMKVEIVSPEDYLGDVMGDVSRRRGVLQGQDDSPSGKIINAMIPLGEMFGYATSLRSMSQGRATFSMEFDHYEEAPANIADAVTKKG.

The 283-residue stretch at 8-290 (ERYRNFGIMA…GVVHLLPSPA (283 aa)) folds into the tr-type G domain. GTP-binding positions include 17–24 (AHIDAGKT), 88–92 (DTPGH), and 142–145 (NKMD). The tract at residues 290–309 (ADRPPVQGIDEDEKEDTRAA) is disordered.

It belongs to the TRAFAC class translation factor GTPase superfamily. Classic translation factor GTPase family. EF-G/EF-2 subfamily.

The protein localises to the cytoplasm. Functionally, catalyzes the GTP-dependent ribosomal translocation step during translation elongation. During this step, the ribosome changes from the pre-translocational (PRE) to the post-translocational (POST) state as the newly formed A-site-bound peptidyl-tRNA and P-site-bound deacylated tRNA move to the P and E sites, respectively. Catalyzes the coordinated movement of the two tRNA molecules, the mRNA and conformational changes in the ribosome. The polypeptide is Elongation factor G (Xanthomonas oryzae pv. oryzae (strain MAFF 311018)).